The following is a 964-amino-acid chain: uncharacterized protein (964 aa).

Residues 97–117 (DSESDVGSDAESDAESDAESD) are compositionally biased toward acidic residues. The segment at 97–208 (DSESDVGSDA…SNSIDNESES (112 aa)) is disordered. A compositionally biased stretch (low complexity) spans 121-148 (HTQNNTNTPINNITLINLDSSNNSTQSD). The segment covering 149 to 163 (NESDNESDNESDNES) has biased composition (acidic residues). Residues 192–203 (NSDNIGNSNSID) are compositionally biased toward low complexity.

This is an uncharacterized protein from Acanthamoeba polyphaga (Amoeba).